Consider the following 235-residue polypeptide: Probable tetraspanin tspA (235 aa).

Residues 1-18 (MVDTSNLLPQTPRLLKVP) lie on the Cytoplasmic side of the membrane. Residues 19–39 (LIILNIILWILGLVLVIVGGI) traverse the membrane as a helical segment. The Extracellular portion of the chain corresponds to 40 to 68 (CVSFLSNFKDFTKASDAKSALSNLTTSIP). N62 is a glycosylation site (N-linked (GlcNAc...) asparagine). Residues 69 to 89 (AGVLVIGILFVIFTVVGCFVA) traverse the membrane as a helical segment. Residues 90-93 (YKEK) are Cytoplasmic-facing. Residues 94–114 (LVGLVIYCAVMLILLVILIGV) traverse the membrane as a helical segment. Topologically, residues 115–200 (GGKAITLHND…FSSKIYAVGA (86 aa)) are extracellular. 3 N-linked (GlcNAc...) asparagine glycosylation sites follow: N139, N143, and N160. Residues 201-221 (AGLAIGIIELVAILFSLFLII) traverse the membrane as a helical segment. At 222-235 (RICRSPRTRSYDQY) the chain is on the cytoplasmic side.

The protein belongs to the tetraspanin (TM4SF) family.

The protein localises to the membrane. The protein is Probable tetraspanin tspA (tspA) of Dictyostelium discoideum (Social amoeba).